The primary structure comprises 362 residues: MIFKKALYILLFLYIAIVKKGESKPGSKHPFLFKNLVIDKKKLDSSYYNKYDNIKWNGKIIAIGDIHGDIESLKLILRHSKLIGENDNWIGDNVLLVQNGDVFDRGIYGPIIYNFLFKLQKEAIKKNSRVILIMGNHEQLNLCGYFNYVNPKEIEMFFHNDANYRYHSFVNPYGEYHKRLIRLPPMVKVNNIIFTHGGLNLLISKLSINDINLKTRLQIENNCKPIKYDSFQNYLSRDGVLWSDAMSRNVPYYEKEKCSELFQILDKYDAKYLVVGHTRQPSHQIGSYCNNHYFLIDTGMSLFTNYGQPYPNYLKIDDHKIKAVRLIVEKKKKCPHTEIQLNTPNKIKYCVQESQTNLNPVL.

A signal peptide spans Met1–Ser23. Residues Asp65, His67, Asp101, and Asn136 each contribute to the Mn(2+) site. The Proton donor role is filled by His137. His196 lines the Mn(2+) pocket.

It belongs to the metallophosphoesterase superfamily. SLP family. It depends on Mn(2+) as a cofactor.

Its function is as follows. Phosphatase which plays an essential role in the development and differentiation of the ookinete and in the formation of ookinete micronemes. The chain is Shewanella-like protein phosphatase 1 from Plasmodium berghei (strain Anka).